A 151-amino-acid chain; its full sequence is tRNA-specific adenosine deaminase (151 aa).

Residues 1–111 (MGKEYFLKVA…LDKKHGGVVS (111 aa)) form the CMP/dCMP-type deaminase domain. Histidine 52 provides a ligand contact to Zn(2+). The active-site Proton donor is glutamate 54. Zn(2+) is bound by residues cysteine 82 and cysteine 85.

Belongs to the cytidine and deoxycytidylate deaminase family. Homodimer. The cofactor is Zn(2+).

The catalysed reaction is adenosine(34) in tRNA + H2O + H(+) = inosine(34) in tRNA + NH4(+). In terms of biological role, catalyzes the deamination of adenosine to inosine at the wobble position 34 of tRNA(Arg2). In Aquifex aeolicus (strain VF5), this protein is tRNA-specific adenosine deaminase.